Reading from the N-terminus, the 800-residue chain is uncharacterized protein (800 aa).

Residues 1 to 21 (MNRFFISTLLLLAQHLAPAAA) form the signal peptide. Polar residues predominate over residues 63–72 (SLSTGSPVEI). Disordered stretches follow at residues 63 to 470 (SLST…PLTT), 602 to 670 (TPIT…SSTS), and 710 to 776 (SSLS…TPSS). Composition is skewed to low complexity over residues 73–314 (TSTS…SSTS), 321–368 (STSS…SSTS), 375–444 (STSS…TSTP), and 451–470 (TTSTSVPYTSTPVTSTPLTT). A compositionally biased stretch (low complexity) spans 710–720 (SSLSSIPNNST). The span at 721–734 (EVKTASTSSGTEIK) shows a compositional bias: polar residues. The segment covering 735 to 776 (TASTSSGSSSSSSYTPASSTSTTTSSVSSRQSSSSSSFTPSS) has biased composition (low complexity).

The protein resides in the secreted. The protein localises to the cell surface. This is an uncharacterized protein from Schizosaccharomyces pombe (strain 972 / ATCC 24843) (Fission yeast).